A 230-amino-acid chain; its full sequence is MAAQAQAPARDGGAQLAGPAAEADPLGRFTCPVCLEVYEKPVQVPCGHVFCSACLQECLKPKKPVCGVCRSALAPGVRAVELERQIESTETSCHGCRKNFFLSKIRAHVATCSKYQNYIMEGVKATTKDASRQPRSVPNRYTFPCPYCPEKNFDQEGLVEHCKLSHSTDTKSVVCPICASMPWGDPNYRSANFIEHLQRRHQFSYDTFVDYDVDEEDMINQVLQRSIIDQ.

An RING-type zinc finger spans residues 31–70 (CPVCLEVYEKPVQVPCGHVFCSACLQECLKPKKPVCGVCR). Positions 93 and 96 each coordinate Zn(2+). The C2HC RNF-type zinc finger occupies 93-112 (CHGCRKNFFLSKIRAHVATC). Residue Lys-104 is modified to N6-acetyllysine. His-108 and Cys-112 together coordinate Zn(2+). Position 114 is an N6-acetyllysine (Lys-114).

Interacts with XAF1, the interaction increases XAF1 stability and proapoptotic effects, and may regulate IFN signaling. Autoubiquitinated. Polyubiquitinated in the presence of E2 enzymes UBE2D1, UBE2D2 and UBE2D3, but only monoubiquitinated in the presence of UBE2E1.

The protein localises to the cytoplasm. It is found in the nucleus. The enzyme catalyses S-ubiquitinyl-[E2 ubiquitin-conjugating enzyme]-L-cysteine + [acceptor protein]-L-lysine = [E2 ubiquitin-conjugating enzyme]-L-cysteine + N(6)-ubiquitinyl-[acceptor protein]-L-lysine.. The protein operates within protein modification; protein ubiquitination. Its function is as follows. E3 ubiquitin-protein ligase that promotes the ubiquitination of various substrates. In turn, participates in the regulation of many biological processes including cell cycle, apoptosis, osteoclastogenesis as well as innate or adaptive immunity. Acts as negative regulator of NF-kappa-B-dependent transcription by promoting the ubiquitination and stabilization of the NF-kappa-B inhibitor TNFAIP3. May promote the ubiquitination of TRAF6 as well. Also acts as a negative regulator of T-cell activation. Inhibits cellular dsRNA responses and interferon production by targeting MAVS component for proteasomal degradation. Ubiquitinates the CDK inhibitor CDKN1A leading to its degradationand probably also CDKN1B and CDKN1C. This activity stimulates cell cycle G1-to-S phase transition and suppresses cellular senescence. May play a role in spermatogenesis. The chain is E3 ubiquitin-protein ligase RNF114 (RNF114) from Bos taurus (Bovine).